Reading from the N-terminus, the 760-residue chain is Transferrin receptor protein 1 (760 aa).

At 1–65 the chain is on the cytoplasmic side; the sequence is MMDQARSAFS…VTKPKRCGGS (65 aa). A mediates interaction with SH3BP4 region spans residues 1–67; it reads MMDQARSAFS…KPKRCGGSIC (67 aa). 2 positions are modified to phosphoserine: Ser-10 and Ser-19. Tyr-20 carries the post-translational modification Phosphotyrosine. Residues 20–23 carry the Endocytosis signal motif; that stretch reads YTRF. Position 21 is a phosphothreonine (Thr-21). Residue Ser-24 is modified to Phosphoserine. The Stop-transfer sequence motif lies at 58–61; the sequence is KPKR. Residues Cys-62 and Cys-67 are each lipidated (S-palmitoyl cysteine). A helical; Signal-anchor for type II membrane protein transmembrane segment spans residues 66-86; the sequence is ICYGTIAVIIFFLIGFMIGYL. Topologically, residues 87 to 760 are extracellular; it reads GYCKGVEPKT…GDVWDIDNEF (674 aa). The 91-residue stretch at 223–313 folds into the PA domain; the sequence is SKAATVTGKL…GTGDPYTPGF (91 aa). Residues Asn-251 and Asn-317 are each glycosylated (N-linked (GlcNAc...) asparagine). Residues 569 to 760 are ligand-binding; that stretch reads TMDTYKELTE…GDVWDIDNEF (192 aa). The Cell attachment site motif lies at 646–648; it reads RGD. 2 N-linked (GlcNAc...) asparagine glycosylation sites follow: Asn-722 and Asn-727.

This sequence belongs to the peptidase M28 family. M28B subfamily. In terms of assembly, homodimer; disulfide-linked. Binds one transferrin or HFE molecule per subunit. Interacts with SH3BP4. Interacts with STEAP3; facilitates TFRC endocytosis in erythroid precursor cells. Post-translationally, stearoylated by ZDHHC6 which inhibits TFRC-mediated activation of the JNK pathway and promotes mitochondrial fragmentation. Stearoylation does not affect iron uptake.

Its subcellular location is the cell membrane. It localises to the melanosome. In terms of biological role, cellular uptake of iron occurs via receptor-mediated endocytosis of ligand-occupied transferrin receptor into specialized endosomes. Endosomal acidification leads to iron release. The apotransferrin-receptor complex is then recycled to the cell surface with a return to neutral pH and the concomitant loss of affinity of apotransferrin for its receptor. Transferrin receptor is necessary for development of erythrocytes and the nervous system. Positively regulates T and B cell proliferation through iron uptake. Acts as a lipid sensor that regulates mitochondrial fusion by regulating activation of the JNK pathway. When dietary levels of stearate (C18:0) are low, promotes activation of the JNK pathway, resulting in HUWE1-mediated ubiquitination and subsequent degradation of the mitofusin MFN2 and inhibition of mitochondrial fusion. When dietary levels of stearate (C18:0) are high, TFRC stearoylation inhibits activation of the JNK pathway and thus degradation of the mitofusin MFN2. Mediates uptake of NICOL1 into fibroblasts where it may regulate extracellular matrix production. In Pongo abelii (Sumatran orangutan), this protein is Transferrin receptor protein 1 (TFRC).